The sequence spans 168 residues: Mediator of RNA polymerase II transcription subunit 7a (168 aa).

Coiled-coil stretches lie at residues Lys64–Leu92 and Ile132–Asp166.

It belongs to the Mediator complex subunit 7 family. In terms of assembly, component of the Mediator complex. Interacts with MEE14/CBP1.

Its subcellular location is the nucleus. Functionally, component of the Mediator complex, a coactivator involved in the regulated transcription of nearly all RNA polymerase II-dependent genes. Mediator functions as a bridge to convey information from gene-specific regulatory proteins to the basal RNA polymerase II transcription machinery. The Mediator complex, having a compact conformation in its free form, is recruited to promoters by direct interactions with regulatory proteins and serves for the assembly of a functional pre-initiation complex with RNA polymerase II and the general transcription factors. This chain is Mediator of RNA polymerase II transcription subunit 7a (MED7A), found in Arabidopsis thaliana (Mouse-ear cress).